Here is a 205-residue protein sequence, read N- to C-terminus: Large ribosomal subunit protein uL13 (205 aa).

Belongs to the universal ribosomal protein uL13 family.

The chain is Large ribosomal subunit protein uL13 (RPL13A) from Lupinus luteus (European yellow lupine).